Consider the following 430-residue polypeptide: Sphingosine-1-phosphate phosphatase 1 (430 aa).

The tract at residues 34-100 (GSPKAGEDAE…PRRAGSLRRN (67 aa)) is disordered. Ser101 is modified (phosphoserine). A Phosphothreonine modification is found at Thr103. Helical transmembrane passes span 121–141 (FCFGTELGNELFYIIFFPFWI), 152–172 (LVIIWVLVMYLGQCTKDIIRW), 193–213 (MPSTHAMSGTAIPIAMILLTY), and 216–236 (WQYPLIYGLILIPCWSSLVCL). Residues 167 to 175 (KDIIRWPRP) form a phosphatase sequence motif I region. Residues 194 to 197 (PSTH) form a phosphatase sequence motif II region. The Proton donor role is filled by His197. The phosphatase sequence motif III stretch occupies residues 237 to 248 (SRIYMGMHSILD). Catalysis depends on His244, which acts as the Nucleophile. 5 helical membrane passes run 246 to 266 (ILDVIAGFLYTILILIIFYPL), 279 to 299 (YAPLIIIGLHLILGIFSFTLD), 311 to 331 (ILGSGAGIACGSHAAYNLGIS), 348 to 368 (VTLFGKAILRVVIGMLLVLFV), and 409 to 429 (YGTVGFSITFLIPYIFSFIGI).

Belongs to the type 2 lipid phosphate phosphatase family.

It localises to the endoplasmic reticulum membrane. The protein resides in the cell membrane. It carries out the reaction sphinganine 1-phosphate + H2O = sphinganine + phosphate. The catalysed reaction is sphing-4-enine 1-phosphate + H2O = sphing-4-enine + phosphate. Functionally, specifically dephosphorylates sphingosine 1-phosphate (S1P), dihydro-S1P, and phyto-S1P. Does not act on ceramide 1-phosphate, lysophosphatidic acid or phosphatidic acid. Sphingosine-1-phosphate phosphatase activity is needed for efficient recycling of sphingosine into the sphingolipid synthesis pathway. Regulates the intracellular levels of the bioactive sphingolipid metabolite S1P that regulates diverse biological processes acting both as an extracellular receptor ligand or as an intracellular second messenger. Involved in efficient ceramide synthesis from exogenous sphingoid bases. Converts S1P to sphingosine, which is readily metabolized to ceramide via ceramide synthase. In concert with sphingosine kinase 2 (SphK2), recycles sphingosine into ceramide through a phosphorylation/dephosphorylation cycle. Regulates endoplasmic-to-Golgi trafficking of ceramides, resulting in the regulation of ceramide levels in the endoplasmic reticulum, preferentially long-chain ceramide species, and influences the anterograde membrane transport of both ceramide and proteins from the endoplasmic reticulum to the Golgi apparatus. The modulation of intracellular ceramide levels in turn regulates apoptosis. Via S1P levels, modulates resting tone, intracellular Ca(2+) and myogenic vasoconstriction in resistance arteries. Also involved in unfolded protein response (UPR) and ER stress-induced autophagy via regulation of intracellular S1P levels. Involved in the regulation of epidermal homeostasis and keratinocyte differentiation. This chain is Sphingosine-1-phosphate phosphatase 1, found in Rattus norvegicus (Rat).